The sequence spans 418 residues: Sonic hedgehog protein (418 aa).

The first 23 residues, 1–23 (MRLLTRVLLVSLLTLSLVVSGLA), serve as a signal peptide directing secretion. Residue Cys24 is the site of N-palmitoyl cysteine attachment. The short motif at 32 to 38 (RRRHPKK) is the Cardin-Weintraub element. Ca(2+) contacts are provided by Glu89, Glu90, Asp95, Thr125, Glu126, Asp129, and Asp131. Zn(2+) is bound by residues His140, Asp147, and His182. The Cholesterol glycine ester moiety is linked to residue Gly197.

This sequence belongs to the hedgehog family. As to quaternary structure, interacts with HHATL/GUP1 which negatively regulates HHAT-mediated palmitoylation of the SHH N-terminus. Interacts with BOC and CDON. Interacts with HHIP. Interacts with DISP1 via its cholesterol anchor. Interacts with SCUBE2. Multimer. The C-terminal domain displays an autoproteolysis activity and a cholesterol transferase activity. Both activities result in the cleavage of the full-length protein and covalent attachment of a cholesterol moiety to the C-terminal of the newly generated N-terminal fragment (ShhN). Cholesterylation is required for the sonic hedgehog protein N-product targeting to lipid rafts and multimerization. ShhN is the active species in both local and long-range signaling, whereas the C-product (ShhC) is degraded in the reticulum endoplasmic. Post-translationally, N-palmitoylation by HHAT of ShhN is required for sonic hedgehog protein N-product multimerization and full activity. It is a prerequisite for the membrane-proximal positioning and the subsequent shedding of this N-terminal peptide. In terms of processing, the lipidated N- and C-terminal peptides of ShhNp can be cleaved (shedding). The N-terminal palmitoylated peptide is cleaved at the Cardin-Weintraub (CW) motif site. The cleavage reduced the interactions with heparan sulfate. The cleavage is enhanced by SCUBE2. Expressed in the ventral midline of the neural tube and brain. Also found in the notochord and in developing fin bud. In the developing brain, expression occurs in domains that include a discrete region in the floor of the diencephalon.

Its subcellular location is the endoplasmic reticulum membrane. The protein localises to the golgi apparatus membrane. It is found in the cell membrane. The enzyme catalyses glycyl-L-cysteinyl-[protein] + cholesterol + H(+) = [protein]-C-terminal glycyl cholesterol ester + N-terminal L-cysteinyl-[protein]. In terms of biological role, the C-terminal part of the sonic hedgehog protein precursor displays an autoproteolysis and a cholesterol transferase activity. Both activities result in the cleavage of the full-length protein into two parts (ShhN and ShhC) followed by the covalent attachment of a cholesterol moiety to the C-terminal of the newly generated ShhN. Both activities occur in the endoplasmic reticulum. Once cleaved, ShhC is degraded in the endoplasmic reticulum. The dually lipidated sonic hedgehog protein N-product (ShhNp) is a morphogen which is essential for a variety of patterning events during development. Involved in dorso-ventral patterning of the brain and in early patterning of the developing eyes. Binds to the patched (PTCH1) receptor, which functions in association with smoothened (SMO), to activate the transcription of target genes. In the absence of SHH, PTCH1 represses the constitutive signaling activity of SMO. This is Sonic hedgehog protein (shha) from Danio rerio (Zebrafish).